The primary structure comprises 233 residues: Zinc import ATP-binding protein ZnuC (233 aa).

Positions 6–222 (IEFHNVSKKF…SDFSNALSSL (217 aa)) constitute an ABC transporter domain. 38–45 (GPNGAGKT) contacts ATP.

Belongs to the ABC transporter superfamily. Zinc importer (TC 3.A.1.15.5) family. The complex is composed of two ATP-binding proteins (ZnuC), two transmembrane proteins (ZnuB) and a solute-binding protein (ZnuA).

It localises to the cell inner membrane. The enzyme catalyses Zn(2+)(out) + ATP(in) + H2O(in) = Zn(2+)(in) + ADP(in) + phosphate(in) + H(+)(in). Its function is as follows. Part of the ABC transporter complex ZnuABC involved in zinc import. Responsible for energy coupling to the transport system. This is Zinc import ATP-binding protein ZnuC from Rickettsia bellii (strain RML369-C).